We begin with the raw amino-acid sequence, 1052 residues long: MKLVNIWLLLLVVLLCGKKHLGDRLEKKSFEKAPCPGCSHLTLKVEFSSTVVEYEYIVAFNGYFTAKARNSFISSALKSSEVDNWRIIPRNNPSSDYPSDFEVIQIKEKQKAGLLTLEDHPNIKRVTPQRKVFRSLKYAESDPTVPCNETRWSQKWQSSRPLRRASLSLGSGFWHATGRHSSRRLLRAIPRQVAQTLQADVLWQMGYTGANVRVAVFDTGLSEKHPHFKNVKERTNWTNERTLDDGLGHGTFVAGVIASMRECQGFAPDAELHIFRVFTNNQVSYTSWFLDAFNYAILKKIDVLNLSIGGPDFMDHPFVDKVWELTANNVIMVSAIGNDGPLYGTLNNPADQMDVIGVGGIDFEDNIARFSSRGMTTWELPGGYGRMKPDIVTYGAGVRGSGVKGGCRALSGTSVASPVVAGAVTLLVSTVQKRELVNPASMKQALIASARRLPGVNMFEQGHGKLDLLRAYQILNSYKPQASLSPSYIDLTECPYMWPYCSQPIYYGGMPTVVNVTILNGMGVTGRIVDKPDWQPYLPQNGDNIEVAFSYSSVLWPWSGYLAISISVTKKAASWEGIAQGHVMITVASPAETESKNGAEQTSTVKLPIKVKIIPTPPRSKRVLWDQYHNLRYPPGYFPRDNLRMKNDPLDWNGDHIHTNFRDMYQHLRSMGYFVEVLGAPFTCFDASQYGTLLMVDSEEEYFPEEIAKLRRDVDNGLSLVIFSDWYNTSVMRKVKFYDENTRQWWMPDTGGANIPALNELLSVWNMGFSDGLYEGEFTLANHDMYYASGCSIAKFPEDGVVITQTFKDQGLEVLKQETAVVENVPILGLYQIPAEGGGRIVLYGDSNCLDDSHRQKDCFWLLDALLQYTSYGVTPPSLSHSGNRQRPPSGAGSVTPERMEGNHLHRYSKVLEAHLGDPKPRPLPACPRLSWAKPQPLNETAPSNLWKHQKLLSIDLDKVVLPNFRSNRPQVRPLSPGESGAWDIPGGIMPGRYNQEVGQTIPVFAFLGAMVVLAFFVVQINKAKSRPKRRKPRVKRPQLMQQVHPPKTPSV.

Residues 1 to 17 form the signal peptide; it reads MKLVNIWLLLLVVLLCG. A propeptide spanning residues 18–186 is cleaved from the precursor; that stretch reads KKHLGDRLEK…TGRHSSRRLL (169 aa). At Ser-168 the chain carries Phosphoserine; by FAM20C. Residues 187–998 are Lumenal-facing; it reads RAIPRQVAQT…IMPGRYNQEV (812 aa). Positions 190-472 constitute a Peptidase S8 domain; that stretch reads PRQVAQTLQA…HGKLDLLRAY (283 aa). The active-site Charge relay system is the Asp-218. Asn-236 carries an N-linked (GlcNAc...) asparagine glycan. The active-site Charge relay system is His-249. Asn-305 is a glycosylation site (N-linked (GlcNAc...) asparagine). Ser-414 serves as the catalytic Charge relay system. Asn-515 and Asn-728 each carry an N-linked (GlcNAc...) asparagine glycan. Residues 877-887 show a composition bias toward polar residues; that stretch reads PSLSHSGNRQR. A disordered region spans residues 877-899; the sequence is PSLSHSGNRQRPPSGAGSVTPER. Residue Asn-939 is glycosylated (N-linked (GlcNAc...) asparagine). The helical transmembrane segment at 999–1021 threads the bilayer; the sequence is GQTIPVFAFLGAMVVLAFFVVQI. Residues 1022 to 1052 are Cytoplasmic-facing; sequence NKAKSRPKRRKPRVKRPQLMQQVHPPKTPSV. The span at 1027 to 1037 shows a compositional bias: basic residues; that stretch reads RPKRRKPRVKR. The interval 1027–1052 is disordered; sequence RPKRRKPRVKRPQLMQQVHPPKTPSV.

Belongs to the peptidase S8 family. As to quaternary structure, interacts with LYSET; this interaction bridges GNPTAB to MBTPS1. The cofactor is Ca(2+). In terms of processing, the 148 kDa zymogen is processed progressively into two membrane-bound 120 and 106 kDa forms in the endoplasmic reticulum, and late into a secreted 98 kDa form. The propeptide is autocatalytically removed through an intramolecular cleavage after Leu-186. Further cleavage generates 14, 10, and 8 kDa intermediates. Widely expressed.

Its subcellular location is the endoplasmic reticulum membrane. The protein resides in the golgi apparatus membrane. It carries out the reaction Processes precursors containing basic and hydrophobic/aliphatic residues at P4 and P2, respectively, with a relatively relaxed acceptance of amino acids at P1 and P3.. Inhibited by divalent copper and zinc ions, but not by nickel or cobalt. Inhibited by its prosegment, but not smaller fragments. Inhibited by 4-(2-aminoethyl)benzenesulfonyl fluoride (AEBSF), a serine protease inhibitor. Serine protease that cleaves after hydrophobic or small residues, provided that Arg or Lys is in position P4: known substrates include SREBF1/SREBP1, SREBF2/SREBP2, BDNF, GNPTAB, ATF6, ATF6B and FAM20C. Cleaves substrates after Arg-Ser-Val-Leu (SREBP2), Arg-His-Leu-Leu (ATF6), Arg-Gly-Leu-Thr (BDNF) and its own propeptide after Arg-Arg-Leu-Leu. Catalyzes the first step in the proteolytic activation of the sterol regulatory element-binding proteins (SREBPs) SREBF1/SREBP1 and SREBF2/SREBP2. Also mediates the first step in the proteolytic activation of the cyclic AMP-dependent transcription factor ATF-6 (ATF6 and ATF6B). Mediates the protein cleavage of GNPTAB into subunit alpha and beta, thereby participating in biogenesis of lysosomes. Cleaves the propeptide from FAM20C which is required for FAM20C secretion from the Golgi apparatus membrane and for enhancement of FAM20C kinase activity, promoting osteoblast differentiation and biomineralization. Involved in the regulation of M6P-dependent Golgi-to-lysosome trafficking of lysosomal enzymes. It is required for the activation of CREB3L2/BBF2H7, a transcriptional activator of MIA3/TANGO and other genes controlling mega vesicle formation. Therefore, it plays a key role in the regulation of mega vesicle-mediated collagen trafficking. In astrocytes and osteoblasts, upon DNA damage and ER stress, mediates the first step of the regulated intramembrane proteolytic activation of the transcription factor CREB3L1, leading to the inhibition of cell-cycle progression. This chain is Membrane-bound transcription factor site-1 protease, found in Homo sapiens (Human).